We begin with the raw amino-acid sequence, 127 residues long: Glycine cleavage system H protein (127 aa).

In terms of domain architecture, Lipoyl-binding spans 22-104 (KVRIGITDFA…YEKAWMIVIE (83 aa)). N6-lipoyllysine is present on lysine 63.

Belongs to the GcvH family. The glycine cleavage system is composed of four proteins: P, T, L and H. Requires (R)-lipoate as cofactor.

In terms of biological role, the glycine cleavage system catalyzes the degradation of glycine. The H protein shuttles the methylamine group of glycine from the P protein to the T protein. Functionally, is also involved in protein lipoylation via its role as an octanoyl/lipoyl carrier protein intermediate. This is Glycine cleavage system H protein from Geobacillus thermodenitrificans (strain NG80-2).